The chain runs to 619 residues: tRNA (guanine(37)-N(1))-methyltransferase 2 (619 aa).

A mitochondrion-targeting transit peptide spans methionine 1 to alanine 10. Residues arginine 434, aspartate 472 to leucine 473, aspartate 500 to glycine 501, and asparagine 523 contribute to the S-adenosyl-L-methionine site.

This sequence belongs to the class I-like SAM-binding methyltransferase superfamily. TRM5/TYW2 family. As to quaternary structure, monomer.

It is found in the mitochondrion matrix. It localises to the nucleus. Its subcellular location is the cytoplasm. It catalyses the reaction guanosine(37) in tRNA + S-adenosyl-L-methionine = N(1)-methylguanosine(37) in tRNA + S-adenosyl-L-homocysteine + H(+). Its function is as follows. Specifically methylates the N1 position of guanosine-37 in various cytoplasmic and mitochondrial tRNAs. Methylation is not dependent on the nature of the nucleoside 5' of the target nucleoside. This is the first step in the biosynthesis of wybutosine (yW), a modified base adjacent to the anticodon of tRNAs and required for accurate decoding. The sequence is that of tRNA (guanine(37)-N(1))-methyltransferase 2 from Arabidopsis thaliana (Mouse-ear cress).